A 342-amino-acid polypeptide reads, in one-letter code: TMELLEDLIEQVRQLPMVNFIEKNSLVHANEFTVAKGAPWGLARISHRDPLSLGSFDQYLYDSNGGTGVTSYVIDTGVNVHHEQFEGRAKWGKTIPQGDEDEDGNGHGTHCAGTIGSNAYGVAKNAEIVAVKVLRSNGSGSMSDVIKGVEFAVKSHQDSVKKGKNSFSTANMSLGGGKSPALDLAVNAAVKAGLHFAVAAGNENQDACNTSPASAENAITVGASTISDARAYFSNYGKCVDIFAPGLNILSTYIGSDAATAYLSGTSMASPHIAGLLTYYLSLQPSSDSEFFIGAEGITPAQLKKNLIAFGTPDVLADIPADTPNILAFNGAGQNLTKFWGH.

Residues 1 to 30 (TMELLEDLIEQVRQLPMVNFIEKNSLVHAN) constitute a propeptide, removed in mature form. Residues 1–30 (TMELLEDLIEQVRQLPMVNFIEKNSLVHAN) enclose the Inhibitor I9 domain. The Peptidase S8 domain occupies 39 to 342 (PWGLARISHR…GQNLTKFWGH (304 aa)). Catalysis depends on charge relay system residues Asp75 and His107. N-linked (GlcNAc...) asparagine glycosylation is found at Asn137 and Asn171. Ser267 serves as the catalytic Charge relay system. Asn335 is a glycosylation site (N-linked (GlcNAc...) asparagine).

The protein belongs to the peptidase S8 family.

In terms of biological role, serine protease. This chain is Subtilisin-like serine protease Rho m 2.0101, found in Rhodotorula mucilaginosa (Yeast).